Reading from the N-terminus, the 547-residue chain is Rho GTPase-activating protein 36 (547 aa).

The signal sequence occupies residues M1 to G40. One can recognise a Rho-GAP domain in the interval M226–F426. The tract at residues A485–P547 is disordered. Over residues E524–K539 the composition is skewed to basic and acidic residues.

In terms of assembly, may interacts (via the Rho-GAP domain) with the active form of RAC1. Detected in the outer root sheath of hair follicles at the level of the stem cell bulge, during the anagen and telogen phases of hair growth (at protein level).

Functionally, GTPase activator for the Rho-type GTPases by converting them to an inactive GDP-bound state. This Homo sapiens (Human) protein is Rho GTPase-activating protein 36 (ARHGAP36).